We begin with the raw amino-acid sequence, 94 residues long: Putative toxin RelE4 (94 aa).

The protein belongs to the RelE toxin family.

In terms of biological role, toxic component of a type II toxin-antitoxin (TA) system. Its cognate antitoxin is RelB4 (Potential). The chain is Putative toxin RelE4 (relE4) from Methanocaldococcus jannaschii (strain ATCC 43067 / DSM 2661 / JAL-1 / JCM 10045 / NBRC 100440) (Methanococcus jannaschii).